Reading from the N-terminus, the 150-residue chain is General odorant-binding protein 19d (150 aa).

The first 23 residues, 1–23 (MSHLVHLTVLLLVGILCLGATSA), serve as a signal peptide directing secretion. 3 cysteine pairs are disulfide-bonded: cysteine 41-cysteine 72, cysteine 68-cysteine 126, and cysteine 116-cysteine 135.

Belongs to the PBP/GOBP family. Expressed in the antenna, mostly on the anterior surface of the third antennal segment. Also detected in the maxillary palps and in cells at the bases of the taste hairs on the proboscis and internal taste organs of the head.

Its subcellular location is the secreted. The sequence is that of General odorant-binding protein 19d (Obp19d) from Drosophila melanogaster (Fruit fly).